We begin with the raw amino-acid sequence, 175 residues long: ATP synthase subunit b (175 aa).

Residues 23 to 43 form a helical membrane-spanning segment; it reads TGITFLVLLFVLGKFAWGPIV.

This sequence belongs to the ATPase B chain family. As to quaternary structure, F-type ATPases have 2 components, F(1) - the catalytic core - and F(0) - the membrane proton channel. F(1) has five subunits: alpha(3), beta(3), gamma(1), delta(1), epsilon(1). F(0) has three main subunits: a(1), b(2) and c(10-14). The alpha and beta chains form an alternating ring which encloses part of the gamma chain. F(1) is attached to F(0) by a central stalk formed by the gamma and epsilon chains, while a peripheral stalk is formed by the delta and b chains.

Its subcellular location is the cell inner membrane. F(1)F(0) ATP synthase produces ATP from ADP in the presence of a proton or sodium gradient. F-type ATPases consist of two structural domains, F(1) containing the extramembraneous catalytic core and F(0) containing the membrane proton channel, linked together by a central stalk and a peripheral stalk. During catalysis, ATP synthesis in the catalytic domain of F(1) is coupled via a rotary mechanism of the central stalk subunits to proton translocation. Functionally, component of the F(0) channel, it forms part of the peripheral stalk, linking F(1) to F(0). This Anaeromyxobacter sp. (strain Fw109-5) protein is ATP synthase subunit b.